A 272-amino-acid chain; its full sequence is Prohibitin 1 (272 aa).

An N-acetylalanine modification is found at Ala-2. Residue Thr-91 is modified to Phosphothreonine. Lys-128 and Lys-186 each carry N6-acetyllysine. Residues 177 to 211 are a coiled coil; sequence KEFTEAVEAKQVAQQEAERARFVVEKAEQQKKAAI. Residue Lys-202 is modified to N6-acetyllysine; alternate. At Lys-202 the chain carries N6-succinyllysine; alternate. Residue Tyr-249 is modified to Phosphotyrosine.

Belongs to the prohibitin family. Interacts with PHB2. Interacts with STOML2. Interacts with CD86 (via cytoplasmic domain); the interactions increases after priming with CD40. In terms of assembly, (Microbial infection) Interacts with human enterovirus 71/EV-71 capsid protein VP0, protein 3CD and protease 3C. In terms of tissue distribution, widely expressed in different tissues.

The protein resides in the mitochondrion inner membrane. It localises to the nucleus. It is found in the cell membrane. Its subcellular location is the cytoplasm. With respect to regulation, target of the anti-cancer drug Rocaglamide (Roc-A). Its function is as follows. Protein with pleiotropic attributes mediated in a cell-compartment- and tissue-specific manner, which include the plasma membrane-associated cell signaling functions, mitochondrial chaperone, and transcriptional co-regulator of transcription factors in the nucleus. Plays a role in adipose tissue and glucose homeostasis in a sex-specific manner. Contributes to pulmonary vascular remodeling by accelerating proliferation of pulmonary arterial smooth muscle cells. In the mitochondria, together with PHB2, forms large ring complexes (prohibitin complexes) in the inner mitochondrial membrane (IMM) and functions as a chaperone protein that stabilizes mitochondrial respiratory enzymes and maintains mitochondrial integrity in the IMM, which is required for mitochondrial morphogenesis, neuronal survival, and normal lifespan. The prohibitin complex, with DNAJC19, regulates cardiolipin remodeling and the protein turnover of OMA1 in a cardiolipin-binding manner. Regulates mitochondrial respiration activity playing a role in cellular aging. The prohibitin complex plays a role of mitophagy receptor involved in targeting mitochondria for autophagic degradation. Involved in mitochondrial-mediated antiviral innate immunity, activates RIG-I-mediated signal transduction and production of IFNB1 and pro-inflammatory cytokine IL6. Functionally, in the nucleus, acts as a transcription coregulator, enhances promoter binding by TP53, a transcription factor it activates, but reduces the promoter binding by E2F1, a transcription factor it represses. Interacts with STAT3 to affect IL17 secretion in T-helper Th17 cells. In terms of biological role, in the plasma membrane, cooperates with CD86 to mediate CD86-signaling in B lymphocytes that regulates the level of IgG1 produced through the activation of distal signaling intermediates. Upon CD40 engagement, required to activate NF-kappa-B signaling pathway via phospholipase C and protein kinase C activation. Its function is as follows. (Microbial infection) In neuronal cells, cell surface-expressed PHB1 is involved in human enterovirus 71/EV-71 entry into neuronal cells specifically, while membrane-bound mitochondrial PHB1 associates with the virus replication complex and facilitates viral replication. May serve as a receptor for EV71. This chain is Prohibitin 1 (Phb1), found in Mus musculus (Mouse).